Reading from the N-terminus, the 473-residue chain is Photosystem II CP43 reaction center protein (473 aa).

Positions 1 to 14 (MKILYSLRRFYHVE) are excised as a propeptide. The residue at position 15 (T15) is an N-acetylthreonine. The residue at position 15 (T15) is a Phosphothreonine. 5 consecutive transmembrane segments (helical) span residues 69–93 (LFEV…PHLA), 134–155 (LLGP…KDRN), 178–200 (KALY…RKIT), 255–275 (KPFA…LSYS), and 291–312 (WFNN…ASQA). Residue E367 participates in [CaMn4O5] cluster binding. Residues 447 to 471 (RARAAAAGFEKGIDRDLEPVLYMNP) form a helical membrane-spanning segment.

This sequence belongs to the PsbB/PsbC family. PsbC subfamily. In terms of assembly, PSII is composed of 1 copy each of membrane proteins PsbA, PsbB, PsbC, PsbD, PsbE, PsbF, PsbH, PsbI, PsbJ, PsbK, PsbL, PsbM, PsbT, PsbX, PsbY, PsbZ, Psb30/Ycf12, at least 3 peripheral proteins of the oxygen-evolving complex and a large number of cofactors. It forms dimeric complexes. Requires Binds multiple chlorophylls and provides some of the ligands for the Ca-4Mn-5O cluster of the oxygen-evolving complex. It may also provide a ligand for a Cl- that is required for oxygen evolution. PSII binds additional chlorophylls, carotenoids and specific lipids. as cofactor.

It is found in the plastid. It localises to the chloroplast thylakoid membrane. Its function is as follows. One of the components of the core complex of photosystem II (PSII). It binds chlorophyll and helps catalyze the primary light-induced photochemical processes of PSII. PSII is a light-driven water:plastoquinone oxidoreductase, using light energy to abstract electrons from H(2)O, generating O(2) and a proton gradient subsequently used for ATP formation. The sequence is that of Photosystem II CP43 reaction center protein from Lolium perenne (Perennial ryegrass).